The primary structure comprises 78 residues: Beta-defensin 105A (78 aa).

Positions 1–27 (MALIRKTFYFVFAVFFILVQQPSGCQA) are cleaved as a signal peptide. 3 disulfides stabilise this stretch: Cys43–Cys74, Cys53–Cys67, and Cys57–Cys73.

It belongs to the beta-defensin family.

It is found in the secreted. Functionally, has antimicrobial activity. This is Beta-defensin 105A (DEFB105A) from Macaca fascicularis (Crab-eating macaque).